A 356-amino-acid chain; its full sequence is S-adenosylmethionine:tRNA ribosyltransferase-isomerase (356 aa).

The protein belongs to the QueA family. In terms of assembly, monomer.

It is found in the cytoplasm. It catalyses the reaction 7-aminomethyl-7-carbaguanosine(34) in tRNA + S-adenosyl-L-methionine = epoxyqueuosine(34) in tRNA + adenine + L-methionine + 2 H(+). It participates in tRNA modification; tRNA-queuosine biosynthesis. In terms of biological role, transfers and isomerizes the ribose moiety from AdoMet to the 7-aminomethyl group of 7-deazaguanine (preQ1-tRNA) to give epoxyqueuosine (oQ-tRNA). This chain is S-adenosylmethionine:tRNA ribosyltransferase-isomerase, found in Escherichia coli (strain UTI89 / UPEC).